A 262-amino-acid polypeptide reads, in one-letter code: Tritrans,polycis-undecaprenyl-diphosphate synthase (geranylgeranyl-diphosphate specific) (262 aa).

Residue Asp40 is part of the active site. Residue Asp40 coordinates Mg(2+). Residues 41–44 (GNRR), Trp45, and 85–87 (STE) each bind substrate. The active-site Proton acceptor is Asn88. Residues Arg92, Arg211, and 217–219 (RIS) contribute to the substrate site. Glu230 contributes to the Mg(2+) binding site.

It belongs to the UPP synthase family. As to quaternary structure, homodimer. It depends on Mg(2+) as a cofactor.

It carries out the reaction geranylgeranyl diphosphate + 7 isopentenyl diphosphate = tri-trans,hepta-cis-undecaprenyl diphosphate + 7 diphosphate. In terms of biological role, catalyzes the sequential condensation of isopentenyl diphosphate (IPP) with geranylgeranyl diphosphate (GGPP) to yield (2Z,6Z,10Z,14Z,18Z,22Z,26Z,30E,34E,38E)-undecaprenyl diphosphate (tritrans,heptacis-UPP). It is probably the precursor of glycosyl carrier lipids. The chain is Tritrans,polycis-undecaprenyl-diphosphate synthase (geranylgeranyl-diphosphate specific) from Sulfurisphaera tokodaii (strain DSM 16993 / JCM 10545 / NBRC 100140 / 7) (Sulfolobus tokodaii).